The sequence spans 531 residues: Maturase K (531 aa).

It belongs to the intron maturase 2 family. MatK subfamily.

The protein resides in the plastid. It is found in the chloroplast. Functionally, usually encoded in the trnK tRNA gene intron. Probably assists in splicing its own and other chloroplast group II introns. This is Maturase K from Ephedra sinica (Chinese ephedra).